A 147-amino-acid polypeptide reads, in one-letter code: Myosin regulatory light chain (147 aa).

T1 carries the N-acetylthreonine modification. EF-hand domains lie at 2–37, 73–108, and 109–144; these read ASADQIQECFQIFDKDNDGKVSIEELGSALRSLGKN, EQSKEMLDAFRALDKEGNGTIQEAELRQLLLNLGDA, and LTSSEVEELMKEVSVSGDGAINYESFVDMLVTGYPL. Ca(2+) contacts are provided by D15, D17, D19, K21, E26, D86, N90, T92, and E97.

The sequence is that of Myosin regulatory light chain from Physarum polycephalum (Slime mold).